Here is a 232-residue protein sequence, read N- to C-terminus: 2-C-methyl-D-erythritol 4-phosphate cytidylyltransferase (232 aa).

The protein belongs to the IspD/TarI cytidylyltransferase family. IspD subfamily.

The enzyme catalyses 2-C-methyl-D-erythritol 4-phosphate + CTP + H(+) = 4-CDP-2-C-methyl-D-erythritol + diphosphate. Its pathway is isoprenoid biosynthesis; isopentenyl diphosphate biosynthesis via DXP pathway; isopentenyl diphosphate from 1-deoxy-D-xylulose 5-phosphate: step 2/6. Functionally, catalyzes the formation of 4-diphosphocytidyl-2-C-methyl-D-erythritol from CTP and 2-C-methyl-D-erythritol 4-phosphate (MEP). The protein is 2-C-methyl-D-erythritol 4-phosphate cytidylyltransferase of Shewanella frigidimarina (strain NCIMB 400).